Consider the following 199-residue polypeptide: VAMP-like protein YKT61 (199 aa).

The region spanning 7-133 (LVLKCAPEAS…LTEALNKFQD (127 aa)) is the Longin domain. Residues 139 to 199 (KLLKIQRELD…KKTNSCCTIL (61 aa)) enclose the v-SNARE coiled-coil homology domain. Cys-195 is lipidated: S-palmitoyl cysteine. Position 196 is a cysteine methyl ester (Cys-196). Cys-196 is lipidated: S-geranylgeranyl cysteine. The propeptide at 197–199 (TIL) is removed in mature form.

Belongs to the synaptobrevin family. In terms of assembly, interacts with SYP41. Core constituent of the SNARE complex required for membrane fusion at the trans-Golgi network. Expressed ubiquitously in roots, stems, flowers and leaves.

It is found in the cell membrane. Its function is as follows. May be involved in the secretory pathway. Essential for membrane fusion mediated by either SYP41 or SYP61; triggers the fusion of phospholipid vesicles containing SYP41 or SYP61 and VTI12. The protein is VAMP-like protein YKT61 of Arabidopsis thaliana (Mouse-ear cress).